A 354-amino-acid chain; its full sequence is Guanine nucleotide-binding protein G(t) subunit alpha-2 (354 aa).

Residues 1 to 27 form a disordered region; sequence MGSGASAEDKELAKRSKELEKKLQEDA. The N-myristoyl glycine moiety is linked to residue G2. The segment covering 7 to 27 has biased composition (basic and acidic residues); sequence AEDKELAKRSKELEKKLQEDA. One can recognise a G-alpha domain in the interval 32–354; it reads KTVKLLLLGA…KENLKDCGLF (323 aa). The interval 35–48 is G1 motif; it reads KLLLLGAGESGKST. Residues 40–47, 175–181, 200–204, 269–272, and A326 each bind GTP; these read GAGESGKS, LRSRVKT, DVGGQ, and NKKD. Position 47 (S47) interacts with Mg(2+). Positions 173 to 181 are G2 motif; that stretch reads DVLRSRVKT. ADP-ribosylarginine; by cholera toxin is present on R178. A Mg(2+)-binding site is contributed by T181. The segment at 196–205 is G3 motif; that stretch reads FRMFDVGGQR. The G4 motif stretch occupies residues 265–272; that stretch reads VLFLNKKD. The segment at 324–329 is G5 motif; that stretch reads TCATDT. C351 carries the ADP-ribosylcysteine; by pertussis toxin modification.

It belongs to the G-alpha family. G(i/o/t/z) subfamily. G proteins are composed of 3 units; alpha, beta and gamma. The alpha chain contains the guanine nucleotide binding site. Retinal rod outer segment.

The protein resides in the cell projection. The protein localises to the cilium. It localises to the photoreceptor outer segment. It is found in the photoreceptor inner segment. In terms of biological role, guanine nucleotide-binding proteins (G proteins) are involved as modulators or transducers in various transmembrane signaling systems. Transducin is an amplifier and one of the transducers of a visual impulse that performs the coupling between rhodopsin and cGMP-phosphodiesterase. The protein is Guanine nucleotide-binding protein G(t) subunit alpha-2 (GNAT2) of Homo sapiens (Human).